A 400-amino-acid polypeptide reads, in one-letter code: Flavo-diiron protein FprA2 (400 aa).

The interval 32–216 (GTSYNAYLIK…VVKGLDILDA (185 aa)) is zinc metallo-hydrolase. Fe cation contacts are provided by His79, Glu81, Asp83, His147, Asp166, and His226. Positions 257–397 (IPIFYCSAYG…KAFKFGEDFA (141 aa)) constitute a Flavodoxin-like domain. Residues 263–267 (SAYGN) and 345–372 (AFGSFGWSGEAIPFVISRLKELKLKVFQ) each bind FMN.

In the N-terminal section; belongs to the zinc metallo-hydrolase group 3 family. Homotetramer. FMN serves as cofactor. It depends on Fe cation as a cofactor.

It catalyses the reaction 2 NADH + O2 + 2 H(+) = 2 NAD(+) + 2 H2O. Its function is as follows. Catalyzes the four-electron reduction of molecular oxygen to water. In fact, functions as the terminal component of an NADH oxidase (NADH:O(2) oxidoreductase) when using NADH:rubredoxin oxidoreductase (NROR) and rubredoxin (Rd) as electron transport intermediaries between NADH and FDP. Is thus able to reductively scavenge intracellular dioxygen and is part of an oxidative stress defense system in C.acetobutylicum, an obligate anaerobic bacterium. Can also serve as the terminal component of an NADH:nitric oxide oxidoreductase (NOR) with a catalytic efficiency comparable to that of its NADH oxidase activity, and therefore might have an in vivo role in scavenging nitric oxide. This chain is Flavo-diiron protein FprA2 (fprA2), found in Clostridium acetobutylicum (strain ATCC 824 / DSM 792 / JCM 1419 / IAM 19013 / LMG 5710 / NBRC 13948 / NRRL B-527 / VKM B-1787 / 2291 / W).